The following is a 398-amino-acid chain: Cysteine desulfurase (398 aa).

Residues 74–75 (GT), Asn155, Gln182, and 202–204 (CGH) contribute to the pyridoxal 5'-phosphate site. Lys205 is subject to N6-(pyridoxal phosphate)lysine. The segment covering 230 to 244 (GHQERSRRAGNGERA) has biased composition (basic and acidic residues). The disordered stretch occupies residues 230–253 (GHQERSRRAGNGERAGHRRAGGGA). Cys327 acts as the Cysteine persulfide intermediate in catalysis. Position 327 (Cys327) interacts with [2Fe-2S] cluster.

It belongs to the class-V pyridoxal-phosphate-dependent aminotransferase family. NifS/IscS subfamily. As to quaternary structure, homodimer. It depends on pyridoxal 5'-phosphate as a cofactor.

It catalyses the reaction (sulfur carrier)-H + L-cysteine = (sulfur carrier)-SH + L-alanine. Functionally, catalyzes the removal of elemental sulfur atoms from cysteine to produce alanine. Seems to participate in the biosynthesis of the nitrogenase metalloclusters by providing the inorganic sulfur required for the Fe-S core formation. In Azospirillum brasilense, this protein is Cysteine desulfurase.